We begin with the raw amino-acid sequence, 658 residues long: UvrABC system protein B (658 aa).

A Helicase ATP-binding domain is found at 25–182 (ESLNGGNSHQ…KGLVDIQYSR (158 aa)). ATP is bound at residue 38-45 (GVTGSGKT). Residues 91–114 (YYDYYQPEAYIPQTDTYIEKDASI) carry the Beta-hairpin motif. The Helicase C-terminal domain maps to 429–595 (QIDDLYSEIN…TVQKKVHDVI (167 aa)). Residues 622 to 657 (KELIAKLQEEMKQAAKELEFEKAAELRDLIMELKTA) form the UVR domain.

It belongs to the UvrB family. As to quaternary structure, forms a heterotetramer with UvrA during the search for lesions. Interacts with UvrC in an incision complex.

The protein localises to the cytoplasm. Functionally, the UvrABC repair system catalyzes the recognition and processing of DNA lesions. A damage recognition complex composed of 2 UvrA and 2 UvrB subunits scans DNA for abnormalities. Upon binding of the UvrA(2)B(2) complex to a putative damaged site, the DNA wraps around one UvrB monomer. DNA wrap is dependent on ATP binding by UvrB and probably causes local melting of the DNA helix, facilitating insertion of UvrB beta-hairpin between the DNA strands. Then UvrB probes one DNA strand for the presence of a lesion. If a lesion is found the UvrA subunits dissociate and the UvrB-DNA preincision complex is formed. This complex is subsequently bound by UvrC and the second UvrB is released. If no lesion is found, the DNA wraps around the other UvrB subunit that will check the other stand for damage. This chain is UvrABC system protein B, found in Natranaerobius thermophilus (strain ATCC BAA-1301 / DSM 18059 / JW/NM-WN-LF).